Reading from the N-terminus, the 215-residue chain is Adenylate kinase (215 aa).

10–15 (GAGKGT) serves as a coordination point for ATP. Residues 30–59 (STGDMFRKAIKDETDLGKEAKSYMDRGELV) form an NMP region. AMP-binding positions include T31, R36, 57-59 (ELV), 85-88 (GFPR), and Q92. The tract at residues 126–163 (GRRICEKCGTTYHLVFNPPKVDGICDIDGGKLYQREDD) is LID. Residue R127 participates in ATP binding. 2 residues coordinate Zn(2+): C130 and C133. 136–137 (TY) provides a ligand contact to ATP. Zn(2+) contacts are provided by C150 and D153. AMP-binding residues include R160 and R171. K199 contacts ATP.

The protein belongs to the adenylate kinase family. In terms of assembly, monomer.

It is found in the cytoplasm. The catalysed reaction is AMP + ATP = 2 ADP. It functions in the pathway purine metabolism; AMP biosynthesis via salvage pathway; AMP from ADP: step 1/1. Functionally, catalyzes the reversible transfer of the terminal phosphate group between ATP and AMP. Plays an important role in cellular energy homeostasis and in adenine nucleotide metabolism. The sequence is that of Adenylate kinase from Staphylococcus epidermidis (strain ATCC 35984 / DSM 28319 / BCRC 17069 / CCUG 31568 / BM 3577 / RP62A).